The primary structure comprises 456 residues: Tyrosine phenol-lyase (456 aa).

Residue K257 is modified to N6-(pyridoxal phosphate)lysine.

This sequence belongs to the beta-eliminating lyase family. As to quaternary structure, homotetramer. Requires pyridoxal 5'-phosphate as cofactor. Contains L-DOPA (3',4'-dihydroxyphenylalanine).

Its subcellular location is the cytoplasm. It carries out the reaction L-tyrosine + H2O = phenol + pyruvate + NH4(+). In Enterobacter agglomerans (Erwinia herbicola), this protein is Tyrosine phenol-lyase (tpl).